Reading from the N-terminus, the 256-residue chain is Probable septum site-determining protein MinC (256 aa).

The segment at 105–143 (RRGATAKPEPADEAEPPVAAAAAEAVPEPAPELAPSAPT) is disordered. Residues 120-142 (PPVAAAAAEAVPEPAPELAPSAP) show a composition bias toward low complexity.

This sequence belongs to the MinC family. As to quaternary structure, interacts with MinD and FtsZ.

Cell division inhibitor that blocks the formation of polar Z ring septums. Rapidly oscillates between the poles of the cell to destabilize FtsZ filaments that have formed before they mature into polar Z rings. Prevents FtsZ polymerization. This is Probable septum site-determining protein MinC from Burkholderia vietnamiensis (strain G4 / LMG 22486) (Burkholderia cepacia (strain R1808)).